Here is a 41-residue protein sequence, read N- to C-terminus: Histone H2B.3, sperm (41 aa).

The tract at residues 1–41 is disordered; sequence MPRSPSKSSPKKGSPRKASPKRGGKGAKRAGKGGRRRTVVK. Short sequence motifs (SPKK motif) lie at residues 4–7, 9–12, 14–17, and 19–22; these read SPSK, SPKK, SPRK, and SPKR. The span at 9 to 41 shows a compositional bias: basic residues; it reads SPKKGSPRKASPKRGGKGAKRAGKGGRRRTVVK. 2 positions are modified to phosphoserine: S14 and S19.

It belongs to the histone H2B family. In terms of assembly, the nucleosome is a histone octamer containing two molecules each of H2A, H2B, H3 and H4 assembled in one H3-H4 heterotetramer and two H2A-H2B heterodimers. The octamer wraps approximately 147 bp of DNA. Monoubiquitination gives a specific tag for epigenetic transcriptional activation and is also prerequisite for histone H3 'Lys-4' and 'Lys-79' methylation. In terms of processing, phosphorylated on SPKK motifs 3 and 4; which may regulate DNA binding. Dephosphorylated during maturation of spermatids to mature sperm and rephosphorylated at fertilization.

It is found in the nucleus. The protein resides in the chromosome. In terms of biological role, core component of nucleosome. Nucleosomes wrap and compact DNA into chromatin, limiting DNA accessibility to the cellular machineries which require DNA as a template. Histones thereby play a central role in transcription regulation, DNA repair, DNA replication and chromosomal stability. DNA accessibility is regulated via a complex set of post-translational modifications of histones, also called histone code, and nucleosome remodeling. The chain is Histone H2B.3, sperm from Echinus esculentus (Sea urchin).